A 96-amino-acid chain; its full sequence is Co-chaperonin GroES (96 aa).

This sequence belongs to the GroES chaperonin family. Heptamer of 7 subunits arranged in a ring. Interacts with the chaperonin GroEL.

It is found in the cytoplasm. Together with the chaperonin GroEL, plays an essential role in assisting protein folding. The GroEL-GroES system forms a nano-cage that allows encapsulation of the non-native substrate proteins and provides a physical environment optimized to promote and accelerate protein folding. GroES binds to the apical surface of the GroEL ring, thereby capping the opening of the GroEL channel. This Acinetobacter baumannii (strain AB307-0294) protein is Co-chaperonin GroES.